The following is a 277-amino-acid chain: Large ribosomal subunit protein uL2c (277 aa).

The disordered stretch occupies residues Met-225–Val-277. Residues Leu-255–Val-277 show a composition bias toward basic residues.

It belongs to the universal ribosomal protein uL2 family. As to quaternary structure, part of the 50S ribosomal subunit.

The protein localises to the plastid. It localises to the chloroplast. This chain is Large ribosomal subunit protein uL2c (rpl2), found in Euglena gracilis.